We begin with the raw amino-acid sequence, 204 residues long: ATP synthase subunit b 2 (204 aa).

Residues 8–28 are disordered; the sequence is AQSSTTEGAEAHDAAAAGEVH. The chain crosses the membrane as a helical span at residues 56–76; sequence LLWLAITFGLFYLLMSKVIIP.

The protein belongs to the ATPase B chain family. F-type ATPases have 2 components, F(1) - the catalytic core - and F(0) - the membrane proton channel. F(1) has five subunits: alpha(3), beta(3), gamma(1), delta(1), epsilon(1). F(0) has three main subunits: a(1), b(2) and c(10-14). The alpha and beta chains form an alternating ring which encloses part of the gamma chain. F(1) is attached to F(0) by a central stalk formed by the gamma and epsilon chains, while a peripheral stalk is formed by the delta and b chains.

It localises to the cell inner membrane. In terms of biological role, f(1)F(0) ATP synthase produces ATP from ADP in the presence of a proton or sodium gradient. F-type ATPases consist of two structural domains, F(1) containing the extramembraneous catalytic core and F(0) containing the membrane proton channel, linked together by a central stalk and a peripheral stalk. During catalysis, ATP synthesis in the catalytic domain of F(1) is coupled via a rotary mechanism of the central stalk subunits to proton translocation. Its function is as follows. Component of the F(0) channel, it forms part of the peripheral stalk, linking F(1) to F(0). The b'-subunit is a diverged and duplicated form of b found in plants and photosynthetic bacteria. This chain is ATP synthase subunit b 2 (atpF2), found in Rhizobium meliloti (strain 1021) (Ensifer meliloti).